The following is a 547-amino-acid chain: Inositol-tetrakisphosphate 1-kinase 6 (547 aa).

Lysine 263 contributes to the 1D-myo-inositol 1,3,4-trisphosphate binding site. ATP is bound by residues arginine 317 and lysine 370. The ATP-grasp domain occupies 327–539 (LEGLSAEGRP…FWDAIKQSYE (213 aa)). 1D-myo-inositol 1,3,4-trisphosphate is bound by residues histidine 381 and lysine 415. Residues 404 to 415 (QEYIDHGSKIFK), serine 430, and serine 450 contribute to the ATP site. Aspartate 497, aspartate 511, and asparagine 513 together coordinate Mg(2+). Asparagine 513 and serine 517 together coordinate 1D-myo-inositol 1,3,4-trisphosphate.

It belongs to the ITPK1 family. Monomer. Mg(2+) serves as cofactor.

It catalyses the reaction 1D-myo-inositol 3,4,5,6-tetrakisphosphate + ATP = 1D-myo-inositol 1,3,4,5,6-pentakisphosphate + ADP + H(+). The catalysed reaction is 1D-myo-inositol 1,3,4-trisphosphate + ATP = 1D-myo-inositol 1,3,4,5-tetrakisphosphate + ADP + H(+). The enzyme catalyses 1D-myo-inositol 1,3,4-trisphosphate + ATP = 1D-myo-inositol 1,3,4,6-tetrakisphosphate + ADP + H(+). Kinase that can phosphorylate various inositol polyphosphate such as Ins(3,4,5,6)P4 or Ins(1,3,4)P3 and participates in phytic acid biosynthesis in developing seeds. Phytic acid is the primary storage form of phosphorus in cereal grains and other plant seeds. This Oryza sativa subsp. indica (Rice) protein is Inositol-tetrakisphosphate 1-kinase 6.